Consider the following 399-residue polypeptide: Tryptophan synthase beta chain (399 aa).

Lys-92 carries the post-translational modification N6-(pyridoxal phosphate)lysine.

Belongs to the TrpB family. Tetramer of two alpha and two beta chains. It depends on pyridoxal 5'-phosphate as a cofactor.

It catalyses the reaction (1S,2R)-1-C-(indol-3-yl)glycerol 3-phosphate + L-serine = D-glyceraldehyde 3-phosphate + L-tryptophan + H2O. Its pathway is amino-acid biosynthesis; L-tryptophan biosynthesis; L-tryptophan from chorismate: step 5/5. In terms of biological role, the beta subunit is responsible for the synthesis of L-tryptophan from indole and L-serine. In Acidithiobacillus ferrooxidans (strain ATCC 23270 / DSM 14882 / CIP 104768 / NCIMB 8455) (Ferrobacillus ferrooxidans (strain ATCC 23270)), this protein is Tryptophan synthase beta chain.